The primary structure comprises 311 residues: Ribosomal RNA small subunit methyltransferase H (311 aa).

S-adenosyl-L-methionine contacts are provided by residues 32 to 34 (AGH), Asp52, Phe79, Asp100, and Gln107.

This sequence belongs to the methyltransferase superfamily. RsmH family.

The protein resides in the cytoplasm. The catalysed reaction is cytidine(1402) in 16S rRNA + S-adenosyl-L-methionine = N(4)-methylcytidine(1402) in 16S rRNA + S-adenosyl-L-homocysteine + H(+). Functionally, specifically methylates the N4 position of cytidine in position 1402 (C1402) of 16S rRNA. The protein is Ribosomal RNA small subunit methyltransferase H of Staphylococcus aureus (strain COL).